The primary structure comprises 84 residues: Cell division topological specificity factor (84 aa).

This sequence belongs to the MinE family.

Prevents the cell division inhibition by proteins MinC and MinD at internal division sites while permitting inhibition at polar sites. This ensures cell division at the proper site by restricting the formation of a division septum at the midpoint of the long axis of the cell. This is Cell division topological specificity factor from Chromohalobacter salexigens (strain ATCC BAA-138 / DSM 3043 / CIP 106854 / NCIMB 13768 / 1H11).